Consider the following 427-residue polypeptide: Enolase (427 aa).

Gln163 is a (2R)-2-phosphoglycerate binding site. The active-site Proton donor is Glu205. Positions 242, 288, and 315 each coordinate Mg(2+). The (2R)-2-phosphoglycerate site is built by Lys340, Arg369, Ser370, and Lys391. Lys340 functions as the Proton acceptor in the catalytic mechanism.

It belongs to the enolase family. Requires Mg(2+) as cofactor.

It is found in the cytoplasm. It localises to the secreted. The protein resides in the cell surface. It carries out the reaction (2R)-2-phosphoglycerate = phosphoenolpyruvate + H2O. Its pathway is carbohydrate degradation; glycolysis; pyruvate from D-glyceraldehyde 3-phosphate: step 4/5. Catalyzes the reversible conversion of 2-phosphoglycerate (2-PG) into phosphoenolpyruvate (PEP). It is essential for the degradation of carbohydrates via glycolysis. The chain is Enolase from Amoebophilus asiaticus (strain 5a2).